An 868-amino-acid chain; its full sequence is Protein translocase subunit SecA (868 aa).

Residues Gln-85, 103–107 (GEGKT), and Asp-508 each bind ATP.

Belongs to the SecA family. As to quaternary structure, monomer and homodimer. Part of the essential Sec protein translocation apparatus which comprises SecA, SecYEG and auxiliary proteins SecDF. Other proteins may also be involved.

It localises to the cell membrane. The protein resides in the cytoplasm. The catalysed reaction is ATP + H2O + cellular proteinSide 1 = ADP + phosphate + cellular proteinSide 2.. Part of the Sec protein translocase complex. Interacts with the SecYEG preprotein conducting channel. Has a central role in coupling the hydrolysis of ATP to the transfer of proteins into and across the cell membrane, serving as an ATP-driven molecular motor driving the stepwise translocation of polypeptide chains across the membrane. The polypeptide is Protein translocase subunit SecA (Deinococcus radiodurans (strain ATCC 13939 / DSM 20539 / JCM 16871 / CCUG 27074 / LMG 4051 / NBRC 15346 / NCIMB 9279 / VKM B-1422 / R1)).